A 1247-amino-acid polypeptide reads, in one-letter code: Respiratory nitrate reductase 1 alpha chain (1247 aa).

Residues aspartate 43 to asparagine 107 enclose the 4Fe-4S Mo/W bis-MGD-type domain. [4Fe-4S] cluster contacts are provided by histidine 50, cysteine 54, cysteine 58, and cysteine 93. A Mo-bis(molybdopterin guanine dinucleotide)-binding site is contributed by aspartate 223.

The protein belongs to the prokaryotic molybdopterin-containing oxidoreductase family. Dimer of heterotrimers each composed of an alpha, a beta and a gamma chain. Alpha and beta are catalytic chains; gamma chains are involved in binding the enzyme complex to the cytoplasmic membrane. Interacts with the NarJ chaperone. Requires [4Fe-4S] cluster as cofactor. Mo-bis(molybdopterin guanine dinucleotide) is required as a cofactor.

It localises to the cell membrane. It carries out the reaction nitrate + a quinol = a quinone + nitrite + H2O. Its function is as follows. The nitrate reductase enzyme complex allows E.coli to use nitrate as an electron acceptor during anaerobic growth. The alpha chain is the actual site of nitrate reduction. This Escherichia coli (strain K12) protein is Respiratory nitrate reductase 1 alpha chain (narG).